The sequence spans 249 residues: AA9 family lytic polysaccharide monooxygenase cel61B (249 aa).

Positions 1 to 19 are cleaved as a signal peptide; it reads MKSCAILAALGCLAGSVLG. His-20 is a Cu(2+) binding site. Residue Asn-25 is glycosylated (N-linked (GlcNAc...) asparagine). Disulfide bonds link Cys-78–Cys-198 and Cys-120–Cys-124. Cu(2+) is bound at residue His-108. O2-binding residues include His-184 and Gln-193. Tyr-195 provides a ligand contact to Cu(2+).

It belongs to the polysaccharide monooxygenase AA9 family. Monomer. It depends on Cu(2+) as a cofactor.

It is found in the secreted. It carries out the reaction [(1-&gt;4)-beta-D-glucosyl]n+m + reduced acceptor + O2 = 4-dehydro-beta-D-glucosyl-[(1-&gt;4)-beta-D-glucosyl]n-1 + [(1-&gt;4)-beta-D-glucosyl]m + acceptor + H2O.. Its function is as follows. Lytic polysaccharide monooxygenase (LPMO) that depolymerizes crystalline and amorphous polysaccharides via the oxidation of scissile alpha- or beta-(1-4)-glycosidic bonds, yielding C1 or C4 oxidation products. Catalysis by LPMOs requires the reduction of the active-site copper from Cu(II) to Cu(I) by a reducing agent and H(2)O(2) or O(2) as a cosubstrate. This Hypocrea jecorina (strain QM6a) (Trichoderma reesei) protein is AA9 family lytic polysaccharide monooxygenase cel61B.